Reading from the N-terminus, the 173-residue chain is MSLAGSRLLFSLVFLVGALASWAAFNLQTGGGLESCSLWSVQRLLLLALGGVNLLAVIQGPGRVGRAVYWGLNLLLGLLGVVTAGRHVLLQNIPSEQLLACLPDMSFMLRQLSWWQALKLTFMGTSDCAEVTWTLLDMSLPEWSLLFFVIMLIFSGYRLWRQLRGARKAVALP.

The Cytoplasmic portion of the chain corresponds to 1-9 (MSLAGSRLL). The helical transmembrane segment at 10–26 (FSLVFLVGALASWAAFN) threads the bilayer. Topologically, residues 27–44 (LQTGGGLESCSLWSVQRL) are periplasmic. Residues 45 to 61 (LLLALGGVNLLAVIQGP) form a helical membrane-spanning segment. Residues 62 to 67 (GRVGRA) lie on the Cytoplasmic side of the membrane. A helical transmembrane segment spans residues 68–85 (VYWGLNLLLGLLGVVTAG). The Periplasmic portion of the chain corresponds to 86–142 (RHVLLQNIPSEQLLACLPDMSFMLRQLSWWQALKLTFMGTSDCAEVTWTLLDMSLPE). A disulfide bridge connects residues Cys101 and Cys128. Residues 143 to 161 (WSLLFFVIMLIFSGYRLWR) form a helical membrane-spanning segment. Topologically, residues 162 to 173 (QLRGARKAVALP) are cytoplasmic.

The protein belongs to the DsbB family.

It localises to the cell inner membrane. Required for disulfide bond formation in some periplasmic proteins. Acts by oxidizing the DsbA protein. The sequence is that of Disulfide bond formation protein B 2 from Pseudomonas fluorescens (strain ATCC BAA-477 / NRRL B-23932 / Pf-5).